The sequence spans 295 residues: Tyrosine recombinase XerD (295 aa).

The 85-residue stretch at Met1–Ile85 folds into the Core-binding (CB) domain. Positions Lys106–Asn289 constitute a Tyr recombinase domain. Active-site residues include Arg146, Lys170, His241, Arg244, and His267. Residue Tyr276 is the O-(3'-phospho-DNA)-tyrosine intermediate of the active site.

This sequence belongs to the 'phage' integrase family. XerD subfamily. In terms of assembly, forms a cyclic heterotetrameric complex composed of two molecules of XerC and two molecules of XerD.

It is found in the cytoplasm. Functionally, site-specific tyrosine recombinase, which acts by catalyzing the cutting and rejoining of the recombining DNA molecules. The XerC-XerD complex is essential to convert dimers of the bacterial chromosome into monomers to permit their segregation at cell division. It also contributes to the segregational stability of plasmids. In Staphylococcus aureus (strain COL), this protein is Tyrosine recombinase XerD.